The following is a 692-amino-acid chain: Zinc finger protein 180 (692 aa).

The 74-residue stretch at valine 72–aspartate 145 folds into the KRAB domain. Residues lysine 138, lysine 159, lysine 168, lysine 191, lysine 198, lysine 226, lysine 304, lysine 313, and lysine 330 each participate in a glycyl lysine isopeptide (Lys-Gly) (interchain with G-Cter in SUMO2) cross-link. 12 C2H2-type zinc fingers span residues phenylalanine 353 to histidine 375, tyrosine 381 to histidine 403, tyrosine 409 to histidine 431, tyrosine 437 to histidine 459, tyrosine 465 to histidine 487, tyrosine 493 to histidine 515, phenylalanine 521 to histidine 543, tyrosine 549 to histidine 571, tyrosine 577 to histidine 599, tyrosine 605 to histidine 627, phenylalanine 633 to histidine 655, and phenylalanine 661 to histidine 683.

The protein belongs to the krueppel C2H2-type zinc-finger protein family.

Its subcellular location is the nucleus. May be involved in transcriptional regulation. This Homo sapiens (Human) protein is Zinc finger protein 180 (ZNF180).